Reading from the N-terminus, the 175-residue chain is Adenine phosphoribosyltransferase (175 aa).

It belongs to the purine/pyrimidine phosphoribosyltransferase family. As to quaternary structure, homodimer.

The protein resides in the cytoplasm. The enzyme catalyses AMP + diphosphate = 5-phospho-alpha-D-ribose 1-diphosphate + adenine. The protein operates within purine metabolism; AMP biosynthesis via salvage pathway; AMP from adenine: step 1/1. Catalyzes a salvage reaction resulting in the formation of AMP, that is energically less costly than de novo synthesis. The polypeptide is Adenine phosphoribosyltransferase (Lactobacillus acidophilus (strain ATCC 700396 / NCK56 / N2 / NCFM)).